The chain runs to 394 residues: 1-deoxy-D-xylulose 5-phosphate reductoisomerase (394 aa).

NADPH-binding residues include T13, G14, S15, I16, and N127. 1-deoxy-D-xylulose 5-phosphate is bound at residue K128. An NADPH-binding site is contributed by E129. Residue D153 participates in Mn(2+) binding. 4 residues coordinate 1-deoxy-D-xylulose 5-phosphate: S154, E155, S184, and H207. A Mn(2+)-binding site is contributed by E155. Residue G213 coordinates NADPH. Residues S220, N225, K226, and E229 each coordinate 1-deoxy-D-xylulose 5-phosphate. A Mn(2+)-binding site is contributed by E229.

This sequence belongs to the DXR family. Mg(2+) serves as cofactor. The cofactor is Mn(2+).

The enzyme catalyses 2-C-methyl-D-erythritol 4-phosphate + NADP(+) = 1-deoxy-D-xylulose 5-phosphate + NADPH + H(+). It functions in the pathway isoprenoid biosynthesis; isopentenyl diphosphate biosynthesis via DXP pathway; isopentenyl diphosphate from 1-deoxy-D-xylulose 5-phosphate: step 1/6. Catalyzes the NADPH-dependent rearrangement and reduction of 1-deoxy-D-xylulose-5-phosphate (DXP) to 2-C-methyl-D-erythritol 4-phosphate (MEP). The polypeptide is 1-deoxy-D-xylulose 5-phosphate reductoisomerase (Ectopseudomonas mendocina (strain ymp) (Pseudomonas mendocina)).